Here is a 284-residue protein sequence, read N- to C-terminus: Undecaprenyl-diphosphatase (284 aa).

Transmembrane regions (helical) follow at residues 7-27 (IILGIIEGITEWLPISSTGHL), 44-64 (EMFDVVIQLGAILSVVVLYFH), 90-110 (LWLKVLIAALPAAIIGLPLND), 116-136 (FYHFVPVAFMLIIYGVAFIVI), 167-187 (VLSLLPGTSRSGATIVGALLI), 197-217 (FTFFLGIPVMFGASFIKILHF), 229-249 (FGVLLVACLVAFGVSMVAIKF), and 259-279 (FTFFGKYRIVLGIVLLIYAAF).

It belongs to the UppP family.

Its subcellular location is the cell membrane. It catalyses the reaction di-trans,octa-cis-undecaprenyl diphosphate + H2O = di-trans,octa-cis-undecaprenyl phosphate + phosphate + H(+). Functionally, catalyzes the dephosphorylation of undecaprenyl diphosphate (UPP). Confers resistance to bacitracin. In Lactococcus lactis subsp. cremoris (strain MG1363), this protein is Undecaprenyl-diphosphatase.